The chain runs to 868 residues: Homeobox-leucine zipper protein HOX29 (868 aa).

A DNA-binding region (homeobox) is located at residues 9–72 (DASKYVRYTP…NRRCREKQRK (64 aa)). Residues 64 to 106 (RRCREKQRKESSRLQALNRKLTAMNKLLMEENDRLQKQVSQLV) adopt a coiled-coil conformation. A disordered region spans residues 150–171 (VTSGHHHQQQQHNVVQPPPRDA). Residues 169 to 397 (RDASPAGLMS…VAHEDTRSVI (229 aa)) form the START domain.

It belongs to the HD-ZIP homeobox family. Class III subfamily. Expressed in phloem.

The protein localises to the nucleus. In terms of biological role, probable transcription factor that may be necessary for the proper patterning of vascular bundles. The sequence is that of Homeobox-leucine zipper protein HOX29 (HOX29) from Oryza sativa subsp. japonica (Rice).